We begin with the raw amino-acid sequence, 194 residues long: HTH-type nicotine-responsive transcriptional repressor HdnoR (194 aa).

One can recognise an HTH tetR-type domain in the interval 6 to 66; the sequence is VDRRQQLIDA…AAAAELLQQL (61 aa). Positions 29-48 form a DNA-binding region, H-T-H motif; it reads SLRTIASEAKASLAAVHVCF.

Homodimer.

6-hydroxy-D-nicotine and 6-hydroxy-L-nicotine prevent HdnoR from binding to the IR1 DNA. Both 6-hydroxy-nicotine enantiomers prevent DNA-protein complex formation at micromolar concentrations, with the D-enantiomer being twice as potent as the L-enantiomer. A thousand-fold higher L-nicotine concentration is required to elicit a similar effect. In terms of biological role, represses expression of the 6-hydroxy-D-nicotine oxidase (6-hdno). Acts by binding to a gene operator site consisting of two inverted repeats, IR1 (covering the 6-hdno promoter region) and IR2 (situated upstream from the 6-hdno promoter). Binding to one site may stimulate binding of the protein to the second site. This Paenarthrobacter nicotinovorans (Arthrobacter nicotinovorans) protein is HTH-type nicotine-responsive transcriptional repressor HdnoR.